A 579-amino-acid chain; its full sequence is PCNA-interacting partner (579 aa).

The interval 480 to 543 (TSFGNVHLDR…AKIPKKSNDS (64 aa)) is disordered. Basic and acidic residues predominate over residues 486-496 (HLDRSKNEKVS).

It belongs to the PARI family. As to quaternary structure, interacts with RAD51 and PCNA. Interacts with PARP1. Interacts with TASOR. Restricted to testis. Overexpressed in multiple cancer cells.

It localises to the cytoplasm. The protein resides in the nucleus. Functionally, required to suppress inappropriate homologous recombination, thereby playing a central role DNA repair and in the maintenance of genomic stability. Antagonizes homologous recombination by interfering with the formation of the RAD51-DNA homologous recombination structure. Binds single-strand DNA and poly(A) homopolymers. Positively regulate the poly(ADP-ribosyl)ation activity of PARP1; however such function may be indirect. This Homo sapiens (Human) protein is PCNA-interacting partner (PARPBP).